The primary structure comprises 391 residues: Phosphoglycerate kinase (391 aa).

Residues 21 to 23 (DLN), Arg-36, 59 to 62 (HLGR), Arg-113, and Arg-146 each bind substrate. ATP-binding positions include Lys-197, Glu-319, and 345 to 348 (GGDT).

Belongs to the phosphoglycerate kinase family. Monomer.

Its subcellular location is the cytoplasm. The enzyme catalyses (2R)-3-phosphoglycerate + ATP = (2R)-3-phospho-glyceroyl phosphate + ADP. Its pathway is carbohydrate degradation; glycolysis; pyruvate from D-glyceraldehyde 3-phosphate: step 2/5. In Shewanella baltica (strain OS155 / ATCC BAA-1091), this protein is Phosphoglycerate kinase.